The following is a 270-amino-acid chain: Small ribosomal subunit protein uS2 (270 aa).

It belongs to the universal ribosomal protein uS2 family. In terms of assembly, component of the small ribosomal subunit. Mature ribosomes consist of a small (40S) and a large (60S) subunit. The 40S subunit contains about 33 different proteins and 1 molecule of RNA (18S). The 60S subunit contains about 49 different proteins and 3 molecules of RNA (28S, 5.8S and 5S). Interacts with oho23B/rpS21.

The protein localises to the cytoplasm. Its subcellular location is the nucleus. In terms of biological role, required for the assembly and/or stability of the 40S ribosomal subunit. Required for the processing of the 20S rRNA-precursor to mature 18S rRNA in a late step of the maturation of 40S ribosomal subunits. Required during oogenesis and imaginal development. This chain is Small ribosomal subunit protein uS2, found in Drosophila persimilis (Fruit fly).